Reading from the N-terminus, the 95-residue chain is Protein TusB (95 aa).

Belongs to the DsrH/TusB family. Heterohexamer, formed by a dimer of trimers. The hexameric TusBCD complex contains 2 copies each of TusB, TusC and TusD. The TusBCD complex interacts with TusE.

It is found in the cytoplasm. Its function is as follows. Part of a sulfur-relay system required for 2-thiolation of 5-methylaminomethyl-2-thiouridine (mnm(5)s(2)U) at tRNA wobble positions. This is Protein TusB from Escherichia coli O157:H7.